Reading from the N-terminus, the 233-residue chain is MKVGIIGAMEEEVNLLRNELTERVDTEIANYHFYEGYLGNMQVVILKSGIGKVNAAIGTTLLIDKFKPDVVINTGSAGGFKKGMKVGDVVVSTEVRHHDVDVTAFGYEYGQVPGMPPAYEADAKLVSVCKDVIENLPDVNVHQGLIVTGDSFINDSKRVADILGHFDGVAAVEMEAAPIAQTCYQFGVPFVVTRSISDSADEEANLSFDEFLETASINSAKMVMAVTKRLEQA.

The Proton acceptor role is filled by glutamate 12. Residues glycine 78, isoleucine 153, and 174 to 175 (ME) each bind substrate. Aspartate 198 (proton donor) is an active-site residue.

It belongs to the PNP/UDP phosphorylase family. MtnN subfamily.

It catalyses the reaction S-adenosyl-L-homocysteine + H2O = S-(5-deoxy-D-ribos-5-yl)-L-homocysteine + adenine. The catalysed reaction is S-methyl-5'-thioadenosine + H2O = 5-(methylsulfanyl)-D-ribose + adenine. The enzyme catalyses 5'-deoxyadenosine + H2O = 5-deoxy-D-ribose + adenine. It participates in amino-acid biosynthesis; L-methionine biosynthesis via salvage pathway; S-methyl-5-thio-alpha-D-ribose 1-phosphate from S-methyl-5'-thioadenosine (hydrolase route): step 1/2. Its function is as follows. Catalyzes the irreversible cleavage of the glycosidic bond in both 5'-methylthioadenosine (MTA) and S-adenosylhomocysteine (SAH/AdoHcy) to adenine and the corresponding thioribose, 5'-methylthioribose and S-ribosylhomocysteine, respectively. Also cleaves 5'-deoxyadenosine, a toxic by-product of radical S-adenosylmethionine (SAM) enzymes, into 5-deoxyribose and adenine. The sequence is that of 5'-methylthioadenosine/S-adenosylhomocysteine nucleosidase from Exiguobacterium sp. (strain ATCC BAA-1283 / AT1b).